Consider the following 336-residue polypeptide: Ribosomal RNA large subunit methyltransferase F (336 aa).

Positions 212-231 (HHLERSRGKPTGKGVRRVRS) are enriched in basic residues. The disordered stretch occupies residues 212–234 (HHLERSRGKPTGKGVRRVRSGRM).

This sequence belongs to the methyltransferase superfamily. METTL16/RlmF family.

Its subcellular location is the cytoplasm. It catalyses the reaction adenosine(1618) in 23S rRNA + S-adenosyl-L-methionine = N(6)-methyladenosine(1618) in 23S rRNA + S-adenosyl-L-homocysteine + H(+). Its function is as follows. Specifically methylates the adenine in position 1618 of 23S rRNA. The polypeptide is Ribosomal RNA large subunit methyltransferase F (Methylobacillus flagellatus (strain ATCC 51484 / DSM 6875 / VKM B-1610 / KT)).